The chain runs to 461 residues: MATWIVGKLIIASLILGIQAQQARTKSQDIFEDDNDNGTTTLESLARLTSPIHIPIEQPQTSDSKILAHLFTSGYDFRVRPPTDNGGPVVVSVNMLLRTISKIDVVNMEYSAQLTLRESWIDKRLSYGVKGDGQPDFVILTVGHQIWMPDTFFPNEKQAYKHTIDKPNVLIRIHNDGTVLYSVRISLVLSCPMYLQYYPMDVQQCSIDLASYAYTTKDIEYLWKEHSPLQLKVGLSSSLPSFQLTNTSTTYCTSVTNTGIYSCLRTTIQLKREFSFYLLQLYIPSCMLVIVSWVSFWFDRTAIPARVTLGVTTLLTMTAQSAGINSQLPPVSYIKAIDVWIGACMTFIFCALLEFALVNHIANKQGVERKARTEREKAEIPLLQNLHNDVPTKVFNQEEKVRTVPLNRRQMNSFLNLLETKTEWNDISKRVDLISRALFPVLFFVFNILYWSRFGQQNVLF.

The signal sequence occupies residues 1–20; it reads MATWIVGKLIIASLILGIQA. Residues 21–275 lie on the Extracellular side of the membrane; the sequence is QQARTKSQDI…TTIQLKREFS (255 aa). Arg-98, Arg-117, and Ser-182 together coordinate L-glutamate. A disulfide bridge connects residues Cys-191 and Cys-205. An L-glutamate-binding site is contributed by Ser-211. Asn-246 carries an N-linked (GlcNAc...) asparagine glycan. Cys-252 and Cys-263 are disulfide-bonded. The chain crosses the membrane as a helical span at residues 276 to 298; sequence FYLLQLYIPSCMLVIVSWVSFWF. Residues 299 to 303 are Cytoplasmic-facing; it reads DRTAI. A helical membrane pass occupies residues 304–325; it reads PARVTLGVTTLLTMTAQSAGIN. Topologically, residues 326–332 are extracellular; it reads SQLPPVS. The helical transmembrane segment at 333 to 353 threads the bilayer; the sequence is YIKAIDVWIGACMTFIFCALL. Over 354–432 the chain is Cytoplasmic; the sequence is EFALVNHIAN…EWNDISKRVD (79 aa). The helical transmembrane segment at 433–454 threads the bilayer; it reads LISRALFPVLFFVFNILYWSRF. Residues 455–461 are Extracellular-facing; it reads GQQNVLF.

It belongs to the ligand-gated ion channel (TC 1.A.9) family. Glutamate-gated chloride channel (TC 1.A.9.4) subfamily. As to quaternary structure, pentamer. Homooligomer, forms functional heterooligomers with glc-2.

The protein localises to the postsynaptic cell membrane. It localises to the cell membrane. In terms of biological role, glutamate-gated chloride channel subunit; channel properties depend on the subunit composition. Glutamate binding triggers a rapidly reversible current in heteromeric channels formed by glc-1 and glc-2, while the anti-helmintic drug ivermectin and other avermectins trigger a permanently open channel configuration. Channels containing only glc-1 are activated by ivermectin, but not by glutamate alone (in vitro). The heteromeric channel formed by glc-1 and glc-2 is also activated by ibotenate, and it is blocked by picrotoxin and flufenamic acid. Plays a role in the regulation of locomotor behavior. The sequence is that of Glutamate-gated chloride channel alpha from Caenorhabditis elegans.